Here is a 456-residue protein sequence, read N- to C-terminus: Methylenetetrahydrofolate--tRNA-(uracil-5-)-methyltransferase TrmFO (456 aa).

Position 7–12 (7–12 (GAGLAG)) interacts with FAD.

It belongs to the MnmG family. TrmFO subfamily. FAD is required as a cofactor.

The protein localises to the cytoplasm. It carries out the reaction uridine(54) in tRNA + (6R)-5,10-methylene-5,6,7,8-tetrahydrofolate + NADH + H(+) = 5-methyluridine(54) in tRNA + (6S)-5,6,7,8-tetrahydrofolate + NAD(+). It catalyses the reaction uridine(54) in tRNA + (6R)-5,10-methylene-5,6,7,8-tetrahydrofolate + NADPH + H(+) = 5-methyluridine(54) in tRNA + (6S)-5,6,7,8-tetrahydrofolate + NADP(+). Its function is as follows. Catalyzes the folate-dependent formation of 5-methyl-uridine at position 54 (M-5-U54) in all tRNAs. In Synechococcus sp. (strain RCC307), this protein is Methylenetetrahydrofolate--tRNA-(uracil-5-)-methyltransferase TrmFO.